The following is a 373-amino-acid chain: L-threonine 3-dehydrogenase, mitochondrial (373 aa).

NAD(+) is bound by residues 62–67, 88–90, 106–107, Tyr-195, Lys-199, and Ile-225; these read GGLGQL, DIR, and DI. Tyr-195 (proton donor/acceptor) is an active-site residue.

Belongs to the NAD(P)-dependent epimerase/dehydratase family. In terms of assembly, homodimer.

It localises to the mitochondrion. It catalyses the reaction L-threonine + NAD(+) = (2S)-2-amino-3-oxobutanoate + NADH + H(+). It participates in amino-acid degradation; L-threonine degradation via oxydo-reductase pathway; glycine from L-threonine: step 1/2. Functionally, catalyzes the NAD(+)-dependent oxidation of L-threonine to 2-amino-3-ketobutyrate, mediating L-threonine catabolism. The polypeptide is L-threonine 3-dehydrogenase, mitochondrial (Bos taurus (Bovine)).